The following is a 398-amino-acid chain: Argininosuccinate synthase (398 aa).

8 to 16 (AYSGGLDTS) contacts ATP. Tyrosine 87 contributes to the L-citrulline binding site. Glycine 117 serves as a coordination point for ATP. Residues threonine 119, asparagine 123, and aspartate 124 each coordinate L-aspartate. Position 123 (asparagine 123) interacts with L-citrulline. 4 residues coordinate L-citrulline: arginine 127, serine 175, glutamate 259, and tyrosine 271.

Belongs to the argininosuccinate synthase family. Type 1 subfamily. In terms of assembly, homotetramer.

The protein localises to the cytoplasm. The catalysed reaction is L-citrulline + L-aspartate + ATP = 2-(N(omega)-L-arginino)succinate + AMP + diphosphate + H(+). Its pathway is amino-acid biosynthesis; L-arginine biosynthesis; L-arginine from L-ornithine and carbamoyl phosphate: step 2/3. The chain is Argininosuccinate synthase from Corynebacterium kroppenstedtii (strain DSM 44385 / JCM 11950 / CIP 105744 / CCUG 35717).